Consider the following 227-residue polypeptide: DNA repair protein RecO (227 aa).

This sequence belongs to the RecO family.

Functionally, involved in DNA repair and RecF pathway recombination. This chain is DNA repair protein RecO, found in Pseudomonas putida (strain W619).